Here is a 408-residue protein sequence, read N- to C-terminus: Aminoacylase-1 (408 aa).

H80 is a Zn(2+) binding site. D82 is a catalytic residue. D113 serves as a coordination point for Zn(2+). Residue E147 is the Proton acceptor of the active site. Positions 148, 175, and 373 each coordinate Zn(2+).

It belongs to the peptidase M20A family. As to quaternary structure, homodimer. Interacts with SPHK1. Zn(2+) is required as a cofactor.

Its subcellular location is the cytoplasm. It carries out the reaction an N-acyl-L-amino acid + H2O = an L-alpha-amino acid + a carboxylate. The enzyme catalyses N-acetyl-L-methionine + H2O = L-methionine + acetate. The catalysed reaction is N-acetyl-L-glutamine + H2O = L-glutamine + acetate. Catalyzes the hydrolysis of N-acetylated amino acids to acetate and free amino acids. This Pongo abelii (Sumatran orangutan) protein is Aminoacylase-1 (ACY1).